The chain runs to 557 residues: Protein NRT1/ PTR FAMILY 5.10 (557 aa).

2 consecutive transmembrane segments (helical) span residues 49–67 (FAYY…GPLG) and 79–99 (AWSG…DSFL). Residue Thr-104 is modified to Phosphothreonine. 10 helical membrane passes run 105–125 (ILAA…SAMI), 144–164 (VITF…HKPC), 186–206 (SFFN…LWVL), 215–235 (WALG…VLLL), 320–340 (APIW…PTFF), 365–385 (FISL…IPIA), 401–421 (IGTG…VEMK), 443–463 (VWWL…AMVG), 479–499 (VGLA…SFMI), and 526–546 (YFYW…LYVA).

Belongs to the major facilitator superfamily. Proton-dependent oligopeptide transporter (POT/PTR) (TC 2.A.17) family. Expressed in shoots, roots and stems. Detected in leaves, flowers and siliques.

It is found in the membrane. In Arabidopsis thaliana (Mouse-ear cress), this protein is Protein NRT1/ PTR FAMILY 5.10 (NPF5.10).